A 79-amino-acid chain; its full sequence is Large ribosomal subunit protein bL28 (79 aa).

This sequence belongs to the bacterial ribosomal protein bL28 family.

The sequence is that of Large ribosomal subunit protein bL28 from Blochmanniella floridana.